A 1398-amino-acid chain; its full sequence is Protein timeless (1398 aa).

Residues 237–268 (VSTLQKLLSLWFEASLSESSEDNESNTSPPKQ) are necessary for normal circadian rhythm. 5 disordered regions span residues 254–300 (ESSE…GGMR), 322–452 (ARVP…QKFN), 478–555 (TKGK…LRRK), 1127–1147 (TASS…SSVS), and 1220–1239 (NHRT…SSTT). Residues 273–290 (SSPMLTSDPTSDSSDNGS) show a composition bias toward low complexity. Over residues 291-300 (NGRGMGGGMR) the composition is skewed to gly residues. The segment covering 338-355 (MTGNDSEQPGSPEQSQPA) has biased composition (polar residues). Positions 365-375 (EDQRHRQLNEH) are enriched in basic and acidic residues. Acidic residues predominate over residues 376–390 (GEEDEDEDEVEEEEY). 3 stretches are compositionally biased toward polar residues: residues 400–421 (LNLT…SSAP), 440–452 (ASTS…QKFN), and 504–515 (QVENQESISTSS). Residues 522–531 (QGKPQHQKPP) show a composition bias toward low complexity. A Nuclear localization signal motif is present at residues 550–560 (KELRRKKLVKR).

It belongs to the timeless family. In terms of assembly, forms a heterodimer with period (PER); the complex then translocates into the nucleus. Phosphorylated with a circadian rhythmicity. Expressed in head, photoreceptors, lateral neurons and glial cells in the lamina and medulla of the optic lobes. Expression follows a light-dark cycle, levels show a significant decrease at the end of the night and then remain low throughout the light period (at protein level).

It is found in the nucleus. Its subcellular location is the cytoplasm. The protein resides in the perinuclear region. Its function is as follows. Required for the production of circadian rhythms. The biological cycle depends on the rhythmic formation and nuclear localization of the TIM-PER complex. Light induces the degradation of TIM, which promotes elimination of PER. Nuclear activity of the heterodimer coordinatively regulates PER and TIM transcription through a negative feedback loop. Behaves as a negative element in circadian transcriptional loop. Does not appear to bind DNA, suggesting indirect transcriptional inhibition. This chain is Protein timeless (tim), found in Drosophila melanogaster (Fruit fly).